Reading from the N-terminus, the 361-residue chain is POU domain, class 3, transcription factor 4 (361 aa).

Disordered stretches follow at residues Pro99–Leu131 and Met144–Asp192. Residues Pro122 to Leu131 are compositionally biased toward polar residues. A compositionally biased stretch (basic and acidic residues) spans Val165–His183. Residues Glu186–Asp260 enclose the POU-specific domain. A Phosphoserine modification is found at Ser265. Residues Lys278–Thr337 constitute a DNA-binding region (homeobox).

It belongs to the POU transcription factor family. Class-3 subfamily. In terms of assembly, interacts with HNRNPU. Brain specific.

Its subcellular location is the nucleus. Probable transcription factor which exert its primary action widely during early neural development and in a very limited set of neurons in the mature brain. The chain is POU domain, class 3, transcription factor 4 (POU3F4) from Homo sapiens (Human).